We begin with the raw amino-acid sequence, 312 residues long: MADDNFTVVTEFILLGLTDHAELKAVLFVVFLVIYAITLLRNLGMILLIQITSKLHTPMYFLLSCLSFVDACYSSAIAPKMLVNLLVVKATISFSACMVQHLCFGVFITTEGFLLSVMAYDRYVAIVSPLLYTVAMSDRKCVELVTGSWIGGIVNTLIHTISLRRLSFCRLNAVSHFFCDIPSLLKLSCSDTSMNELLLLTFSGVIAMATFLTVIISYIFIAFASLRIHSASGRQQAFSTCASHLTAVTIFYGTLIFSYIQPSSQYFVEQEKVVSMFYTLGIPMLNLLIHSLRNKDVKEAVKRAIEMKHFLC.

The Extracellular portion of the chain corresponds to 1-25 (MADDNFTVVTEFILLGLTDHAELKA). Asparagine 5 is a glycosylation site (N-linked (GlcNAc...) asparagine). The chain crosses the membrane as a helical span at residues 26–46 (VLFVVFLVIYAITLLRNLGMI). The Cytoplasmic portion of the chain corresponds to 47 to 54 (LLIQITSK). The chain crosses the membrane as a helical span at residues 55–75 (LHTPMYFLLSCLSFVDACYSS). The Extracellular portion of the chain corresponds to 76–99 (AIAPKMLVNLLVVKATISFSACMV). A disulfide bridge connects residues cysteine 97 and cysteine 189. Residues 100–120 (QHLCFGVFITTEGFLLSVMAY) form a helical membrane-spanning segment. Residues 121–139 (DRYVAIVSPLLYTVAMSDR) are Cytoplasmic-facing. Residues 140–160 (KCVELVTGSWIGGIVNTLIHT) traverse the membrane as a helical segment. Topologically, residues 161–196 (ISLRRLSFCRLNAVSHFFCDIPSLLKLSCSDTSMNE) are extracellular. Residues 197-217 (LLLLTFSGVIAMATFLTVIIS) traverse the membrane as a helical segment. Residues 218–237 (YIFIAFASLRIHSASGRQQA) lie on the Cytoplasmic side of the membrane. Residues 238–258 (FSTCASHLTAVTIFYGTLIFS) form a helical membrane-spanning segment. Residues 259–271 (YIQPSSQYFVEQE) lie on the Extracellular side of the membrane. A helical transmembrane segment spans residues 272 to 292 (KVVSMFYTLGIPMLNLLIHSL). Topologically, residues 293 to 312 (RNKDVKEAVKRAIEMKHFLC) are cytoplasmic.

Belongs to the G-protein coupled receptor 1 family.

It localises to the cell membrane. Functionally, odorant receptor. In Homo sapiens (Human), this protein is Olfactory receptor 5J2 (OR5J2).